Reading from the N-terminus, the 376-residue chain is Spermidine/putrescine import ATP-binding protein PotA (376 aa).

In terms of domain architecture, ABC transporter spans 6–236 (INIVNVNKSF…PADTFVADFL (231 aa)). ATP is bound at residue 38–45 (GPSGCGKT).

It belongs to the ABC transporter superfamily. Spermidine/putrescine importer (TC 3.A.1.11.1) family. As to quaternary structure, the complex is composed of two ATP-binding proteins (PotA), two transmembrane proteins (PotB and PotC) and a solute-binding protein (PotD).

The protein localises to the cell inner membrane. It carries out the reaction ATP + H2O + polyamine-[polyamine-binding protein]Side 1 = ADP + phosphate + polyamineSide 2 + [polyamine-binding protein]Side 1.. Its function is as follows. Part of the ABC transporter complex PotABCD involved in spermidine/putrescine import. Responsible for energy coupling to the transport system. This Fusobacterium nucleatum subsp. nucleatum (strain ATCC 25586 / DSM 15643 / BCRC 10681 / CIP 101130 / JCM 8532 / KCTC 2640 / LMG 13131 / VPI 4355) protein is Spermidine/putrescine import ATP-binding protein PotA.